A 311-amino-acid polypeptide reads, in one-letter code: Porphobilinogen deaminase (311 aa).

C241 bears the S-(dipyrrolylmethanemethyl)cysteine mark.

Belongs to the HMBS family. As to quaternary structure, monomer. Dipyrromethane serves as cofactor.

It catalyses the reaction 4 porphobilinogen + H2O = hydroxymethylbilane + 4 NH4(+). The protein operates within porphyrin-containing compound metabolism; protoporphyrin-IX biosynthesis; coproporphyrinogen-III from 5-aminolevulinate: step 2/4. Functionally, tetrapolymerization of the monopyrrole PBG into the hydroxymethylbilane pre-uroporphyrinogen in several discrete steps. The chain is Porphobilinogen deaminase (hemC) from Halalkalibacterium halodurans (strain ATCC BAA-125 / DSM 18197 / FERM 7344 / JCM 9153 / C-125) (Bacillus halodurans).